Consider the following 340-residue polypeptide: Protein jhp_1168 (340 aa).

As to quaternary structure, seems to interact with H.pylori HolB.

In terms of biological role, could be the functional equivalent of DNA polymerase III delta subunit (HolA). This chain is Protein jhp_1168, found in Helicobacter pylori (strain J99 / ATCC 700824) (Campylobacter pylori J99).